The following is a 368-amino-acid chain: uncharacterized protein (368 aa).

The protein belongs to the YCR102c/YLR460c/YNL134c family.

This is an uncharacterized protein from Saccharomyces cerevisiae (strain ATCC 204508 / S288c) (Baker's yeast).